A 236-amino-acid chain; its full sequence is DNA repair protein RecO (236 aa).

This sequence belongs to the RecO family.

Functionally, involved in DNA repair and RecF pathway recombination. The polypeptide is DNA repair protein RecO (Cellvibrio japonicus (strain Ueda107) (Pseudomonas fluorescens subsp. cellulosa)).